The following is a 216-amino-acid chain: Peptide methionine sulfoxide reductase MsrA (216 aa).

Residue Cys57 is part of the active site.

This sequence belongs to the MsrA Met sulfoxide reductase family.

The enzyme catalyses L-methionyl-[protein] + [thioredoxin]-disulfide + H2O = L-methionyl-(S)-S-oxide-[protein] + [thioredoxin]-dithiol. It carries out the reaction [thioredoxin]-disulfide + L-methionine + H2O = L-methionine (S)-S-oxide + [thioredoxin]-dithiol. In terms of biological role, has an important function as a repair enzyme for proteins that have been inactivated by oxidation. Catalyzes the reversible oxidation-reduction of methionine sulfoxide in proteins to methionine. The chain is Peptide methionine sulfoxide reductase MsrA from Agrobacterium fabrum (strain C58 / ATCC 33970) (Agrobacterium tumefaciens (strain C58)).